The primary structure comprises 273 residues: Putative pyruvate, phosphate dikinase regulatory protein (273 aa).

Glycine 151 to threonine 158 lines the ADP pocket.

It belongs to the pyruvate, phosphate/water dikinase regulatory protein family. PDRP subfamily.

The enzyme catalyses N(tele)-phospho-L-histidyl/L-threonyl-[pyruvate, phosphate dikinase] + ADP = N(tele)-phospho-L-histidyl/O-phospho-L-threonyl-[pyruvate, phosphate dikinase] + AMP + H(+). It catalyses the reaction N(tele)-phospho-L-histidyl/O-phospho-L-threonyl-[pyruvate, phosphate dikinase] + phosphate + H(+) = N(tele)-phospho-L-histidyl/L-threonyl-[pyruvate, phosphate dikinase] + diphosphate. Its function is as follows. Bifunctional serine/threonine kinase and phosphorylase involved in the regulation of the pyruvate, phosphate dikinase (PPDK) by catalyzing its phosphorylation/dephosphorylation. This chain is Putative pyruvate, phosphate dikinase regulatory protein, found in Desulfitobacterium hafniense (strain Y51).